Reading from the N-terminus, the 305-residue chain is Probable lipid kinase YegS-like (305 aa).

The DAGKc domain maps to 2-134 (HPPAPALLII…DLAKVNDQRY (133 aa)). ATP-binding positions include T40, 66–72 (GDGTINE), and T95. Mg(2+)-binding residues include L215, D218, and L220. Catalysis depends on E271, which acts as the Proton acceptor.

Belongs to the diacylglycerol/lipid kinase family. YegS lipid kinase subfamily. Requires Mg(2+) as cofactor. It depends on Ca(2+) as a cofactor.

Its subcellular location is the cytoplasm. In terms of biological role, probably phosphorylates lipids; the in vivo substrate is unknown. The protein is Probable lipid kinase YegS-like of Serratia proteamaculans (strain 568).